Reading from the N-terminus, the 366-residue chain is Protein RecA (366 aa).

81–88 (GPESSGKT) provides a ligand contact to ATP.

It belongs to the RecA family.

The protein resides in the cytoplasm. Can catalyze the hydrolysis of ATP in the presence of single-stranded DNA, the ATP-dependent uptake of single-stranded DNA by duplex DNA, and the ATP-dependent hybridization of homologous single-stranded DNAs. It interacts with LexA causing its activation and leading to its autocatalytic cleavage. This chain is Protein RecA, found in Leptospira interrogans serogroup Icterohaemorrhagiae serovar copenhageni (strain Fiocruz L1-130).